A 325-amino-acid polypeptide reads, in one-letter code: Peroxidase 68 (325 aa).

The signal sequence occupies residues 1-28 (MECYEQSRQRAAFVVLLFIVMLGSQAQA). A Pyrrolidone carboxylic acid modification is found at Q29. Cystine bridges form between C39/C119, C72/C77, C125/C321, and C205/C230. H70 functions as the Proton acceptor in the catalytic mechanism. 5 residues coordinate Ca(2+): D71, V74, G76, D78, and S80. The N-linked (GlcNAc...) asparagine glycan is linked to N99. A substrate-binding site is contributed by P168. H198 serves as a coordination point for heme b. T199 lines the Ca(2+) pocket. N214 carries N-linked (GlcNAc...) asparagine glycosylation. 3 residues coordinate Ca(2+): D245, T248, and D253.

The protein belongs to the peroxidase family. Classical plant (class III) peroxidase subfamily. It depends on heme b as a cofactor. Ca(2+) serves as cofactor.

It is found in the secreted. It carries out the reaction 2 a phenolic donor + H2O2 = 2 a phenolic radical donor + 2 H2O. Removal of H(2)O(2), oxidation of toxic reductants, biosynthesis and degradation of lignin, suberization, auxin catabolism, response to environmental stresses such as wounding, pathogen attack and oxidative stress. These functions might be dependent on each isozyme/isoform in each plant tissue. This chain is Peroxidase 68 (PER68), found in Arabidopsis thaliana (Mouse-ear cress).